We begin with the raw amino-acid sequence, 310 residues long: MAAIIYLAIAAVASILLFVAVKLLSTDTKTEIRTDDDVGELIGRENPVPQRPRARARRGLRNKTNRSKTQRQHDNDYDDYDDEYQDDGFLEEPVYDRKMGTKKLRKLEEKAEKKAMREQMEAEREDKINRQELREQNRRKEEERKAKEREEKEEAERKLKEEQEKREYEEYLRLKESFSVENEGSGEAEIAQESQSLLQEFIDYIKNNKVVLLEDVAAHFKLRTEDVINRIQTLQSMDRLTGVVDDRGKYIYISVEELNAIAKFIKQRGRVSISELAESSNSLINLQSDSKASHTIESVNDSPAEISVNA.

Residues 1 to 21 traverse the membrane as a helical segment; the sequence is MAAIIYLAIAAVASILLFVAV. Topologically, residues 22–310 are cytoplasmic; the sequence is KLLSTDTKTE…DSPAEISVNA (289 aa). 2 disordered regions span residues 38–85 and 110–162; these read VGEL…DEYQ and KAEK…LKEE. Basic residues predominate over residues 52–70; it reads PRARARRGLRNKTNRSKTQ. Over residues 76–85 the composition is skewed to acidic residues; that stretch reads DYDDYDDEYQ.

Belongs to the DDRGK1 family.

It is found in the endoplasmic reticulum membrane. Substrate adapter for ufmylation, the covalent attachment of the ubiquitin-like modifier UFM1 to substrate proteins. This Trichoplax adhaerens (Trichoplax reptans) protein is DDRGK domain-containing protein 1.